A 314-amino-acid polypeptide reads, in one-letter code: DNA-directed RNA polymerase subunit alpha (314 aa).

The segment at 1 to 228 (MIEIEKPRIE…EHLNIFVGLT (228 aa)) is alpha N-terminal domain (alpha-NTD). Residues 245-314 (KEKVLEMSIE…DLGLGLRKED (70 aa)) are alpha C-terminal domain (alpha-CTD).

It belongs to the RNA polymerase alpha chain family. Homodimer. The RNAP catalytic core consists of 2 alpha, 1 beta, 1 beta' and 1 omega subunit. When a sigma factor is associated with the core the holoenzyme is formed, which can initiate transcription.

It carries out the reaction RNA(n) + a ribonucleoside 5'-triphosphate = RNA(n+1) + diphosphate. Functionally, DNA-dependent RNA polymerase catalyzes the transcription of DNA into RNA using the four ribonucleoside triphosphates as substrates. The polypeptide is DNA-directed RNA polymerase subunit alpha (Staphylococcus aureus (strain bovine RF122 / ET3-1)).